The chain runs to 394 residues: S-adenosylmethionine synthase 2 (394 aa).

Residue glutamate 11 participates in Mg(2+) binding. Histidine 17 lines the ATP pocket. Glutamate 45 contacts K(+). The L-methionine site is built by glutamate 58 and glutamine 101. Residues 169 to 171 (DGK), 237 to 240 (SGRF), aspartate 248, 254 to 255 (RK), alanine 271, lysine 275, and lysine 279 each bind ATP. Aspartate 248 lines the L-methionine pocket. Residue lysine 279 participates in L-methionine binding.

This sequence belongs to the AdoMet synthase family. Homotetramer. It depends on Mn(2+) as a cofactor. The cofactor is Mg(2+). Co(2+) serves as cofactor. Requires K(+) as cofactor.

Its subcellular location is the cytoplasm. The catalysed reaction is L-methionine + ATP + H2O = S-adenosyl-L-methionine + phosphate + diphosphate. The protein operates within amino-acid biosynthesis; S-adenosyl-L-methionine biosynthesis; S-adenosyl-L-methionine from L-methionine: step 1/1. Catalyzes the formation of S-adenosylmethionine from methionine and ATP. The reaction comprises two steps that are both catalyzed by the same enzyme: formation of S-adenosylmethionine (AdoMet) and triphosphate, and subsequent hydrolysis of the triphosphate. The polypeptide is S-adenosylmethionine synthase 2 (SAM2) (Hordeum vulgare (Barley)).